The primary structure comprises 357 residues: uncharacterized protein (357 aa).

A Phosphoserine modification is found at S72. Disordered regions lie at residues 79 to 98, 264 to 290, and 323 to 357; these read GVNE…RPSR, QKQL…GASV, and ISDE…EPLK. Residues 324 to 335 are compositionally biased toward acidic residues; the sequence is SDEDEEDEEEDS.

This is an uncharacterized protein from Saccharomyces cerevisiae (strain ATCC 204508 / S288c) (Baker's yeast).